Consider the following 773-residue polypeptide: Membrane-bound aldehyde dehydrogenase [pyrroloquinoline-quinone] (773 aa).

The tat-type signal signal peptide spans 1 to 44 (MGRLNRFRLGKDGRREQASLSRRGFLVTSLGAGVMFGFARPSSA).

Pyrroloquinoline quinone is required as a cofactor. Predicted to be exported by the Tat system. The position of the signal peptide cleavage has been experimentally proven.

It is found in the cell inner membrane. The enzyme catalyses an aldehyde + a quinone + H2O = a quinol + a carboxylate + H(+). The protein is Membrane-bound aldehyde dehydrogenase [pyrroloquinoline-quinone] of Gluconacetobacter polyoxogenes (Acetobacter polyoxogenes).